Consider the following 354-residue polypeptide: Uroporphyrinogen decarboxylase (354 aa).

Substrate is bound by residues 25 to 29 (RQAGR), aspartate 75, tyrosine 152, threonine 207, and histidine 330.

The protein belongs to the uroporphyrinogen decarboxylase family. As to quaternary structure, homodimer.

It localises to the cytoplasm. It catalyses the reaction uroporphyrinogen III + 4 H(+) = coproporphyrinogen III + 4 CO2. Its pathway is porphyrin-containing compound metabolism; protoporphyrin-IX biosynthesis; coproporphyrinogen-III from 5-aminolevulinate: step 4/4. In terms of biological role, catalyzes the decarboxylation of four acetate groups of uroporphyrinogen-III to yield coproporphyrinogen-III. The polypeptide is Uroporphyrinogen decarboxylase (Xanthomonas campestris pv. campestris (strain 8004)).